The primary structure comprises 201 residues: ATP-dependent Clp protease proteolytic subunit 2 (201 aa).

S98 functions as the Nucleophile in the catalytic mechanism. Residue H123 is part of the active site.

This sequence belongs to the peptidase S14 family. In terms of assembly, fourteen ClpP subunits assemble into 2 heptameric rings which stack back to back to give a disk-like structure with a central cavity, resembling the structure of eukaryotic proteasomes.

It is found in the cytoplasm. The catalysed reaction is Hydrolysis of proteins to small peptides in the presence of ATP and magnesium. alpha-casein is the usual test substrate. In the absence of ATP, only oligopeptides shorter than five residues are hydrolyzed (such as succinyl-Leu-Tyr-|-NHMec, and Leu-Tyr-Leu-|-Tyr-Trp, in which cleavage of the -Tyr-|-Leu- and -Tyr-|-Trp bonds also occurs).. Cleaves peptides in various proteins in a process that requires ATP hydrolysis. Has a chymotrypsin-like activity. Plays a major role in the degradation of misfolded proteins. The polypeptide is ATP-dependent Clp protease proteolytic subunit 2 (Rhizobium johnstonii (strain DSM 114642 / LMG 32736 / 3841) (Rhizobium leguminosarum bv. viciae)).